We begin with the raw amino-acid sequence, 103 residues long: Small ribosomal subunit protein eS25 (103 aa).

The segment at 1–23 is disordered; the sequence is MGGEDMAKKKAPSAKEGEKQQGF.

The protein belongs to the eukaryotic ribosomal protein eS25 family.

This is Small ribosomal subunit protein eS25 (rps25e) from Aeropyrum pernix (strain ATCC 700893 / DSM 11879 / JCM 9820 / NBRC 100138 / K1).